The sequence spans 506 residues: Lysine--tRNA ligase (506 aa).

2 residues coordinate Mg(2+): Glu415 and Glu422.

Belongs to the class-II aminoacyl-tRNA synthetase family. In terms of assembly, homodimer. Mg(2+) serves as cofactor.

The protein resides in the cytoplasm. The enzyme catalyses tRNA(Lys) + L-lysine + ATP = L-lysyl-tRNA(Lys) + AMP + diphosphate. This Erwinia tasmaniensis (strain DSM 17950 / CFBP 7177 / CIP 109463 / NCPPB 4357 / Et1/99) protein is Lysine--tRNA ligase.